The primary structure comprises 510 residues: Gelatinase (510 aa).

The N-terminal stretch at 1-30 is a signal peptide; the sequence is MMKGNKILYILGTGIFVGSSCLFSSLFVAA. The propeptide occupies 31-192; sequence EEQVYSESEV…IMEKQDLTEH (162 aa). Residue aspartate 324 coordinates Ca(2+). Histidine 328 contacts Zn(2+). Residue glutamate 329 is part of the active site. Residues histidine 332 and glutamate 352 each contribute to the Zn(2+) site. Serine 376 contributes to the Ca(2+) binding site. Histidine 419 serves as the catalytic Proton donor.

Belongs to the peptidase M4 family.

It localises to the secreted. The catalysed reaction is Preferential cleavage: Xaa-|-Leu, Xaa-|-Phe, Xaa-|-Tyr, Xaa-|-Ala.. With respect to regulation, inhibited by L-leucine hydroxamate and phosphoramidon. Not inhibited by phenylmethanesulfonyl fluoride. Reversibly inactivated by straight-chain aliphatic alcohols. Functionally, metalloprotease capable of the hydrolysis of insoluble hydrophobic substrates. Hydrolyzes azocoll and gelatin and, at a lower rate, soluble and insoluble collagens. Does not cleave short synthetic peptides. Preferentially hydrolyzes the 24-Phe-|-Phe-25 bond in the insulin B-chain, followed by the 5-His-|-Leu-6 bond. Inactivates endothelin-1, primarily by cleavage of the 5-Ser-|-Leu-6 and 16-His-|-Leu-17 bonds. Hydrolyzes the alpha chain of C3 to generate a C3b-like protein. Inhibits complement-mediated hemolysis and opsinization of bacteria. Hydrolyzes the insect antimicrobial peptide cecropin. Decreases the length of E.faecalis chains via the activation of autolysin. Degrades polymerized fibrin. The chain is Gelatinase from Enterococcus faecalis (strain ATCC 700802 / V583).